A 475-amino-acid polypeptide reads, in one-letter code: Pyruvate kinase (475 aa).

Arg33 serves as a coordination point for substrate. 3 residues coordinate K(+): Asn35, Ser37, and Asp67. 35–38 (NFSH) lines the ATP pocket. Positions 74 and 155 each coordinate ATP. Position 220 (Glu220) interacts with Mg(2+). 3 residues coordinate substrate: Gly243, Asp244, and Thr276. Residue Asp244 coordinates Mg(2+).

Belongs to the pyruvate kinase family. Homotetramer. The cofactor is Mg(2+). Requires K(+) as cofactor.

The catalysed reaction is pyruvate + ATP = phosphoenolpyruvate + ADP + H(+). Its pathway is carbohydrate degradation; glycolysis; pyruvate from D-glyceraldehyde 3-phosphate: step 5/5. In Corynebacterium glutamicum (strain ATCC 13032 / DSM 20300 / JCM 1318 / BCRC 11384 / CCUG 27702 / LMG 3730 / NBRC 12168 / NCIMB 10025 / NRRL B-2784 / 534), this protein is Pyruvate kinase (pyk).